Consider the following 321-residue polypeptide: Tetraacyldisaccharide 4'-kinase (321 aa).

54-61 (SVGGTGKT) contacts ATP.

It belongs to the LpxK family.

It catalyses the reaction a lipid A disaccharide + ATP = a lipid IVA + ADP + H(+). It participates in glycolipid biosynthesis; lipid IV(A) biosynthesis; lipid IV(A) from (3R)-3-hydroxytetradecanoyl-[acyl-carrier-protein] and UDP-N-acetyl-alpha-D-glucosamine: step 6/6. In terms of biological role, transfers the gamma-phosphate of ATP to the 4'-position of a tetraacyldisaccharide 1-phosphate intermediate (termed DS-1-P) to form tetraacyldisaccharide 1,4'-bis-phosphate (lipid IVA). The sequence is that of Tetraacyldisaccharide 4'-kinase from Rickettsia typhi (strain ATCC VR-144 / Wilmington).